Reading from the N-terminus, the 519-residue chain is F-box-like/WD repeat-containing protein TBL1XR1-A (519 aa).

In terms of domain architecture, LisH spans 4-36 (SSDEVNFLVYRYLQESGFSHSAFTFGIESHISQ). Residues 41 to 86 (GALAPPAALISIIQKGLQYVEAEVSINEDGTLFDGRPIESLSLIDA) form the F-box-like domain. Residues 115–139 (AAAAAATPNNQQPPAKNGENTANGE) are compositionally biased toward low complexity. Residues 115-147 (AAAAAATPNNQQPPAKNGENTANGEENGGHALA) are disordered. 8 WD repeats span residues 172 to 211 (GHESEVFICAWNPVSDLLASGSGDSTARIWNLSENSTSGS), 228 to 267 (PSNKDVTSLDWNSEGTLLATGSYDGFARIWTKDGNLASTL), 269 to 308 (QHKGPIFALKWNKKGNFILSAGVDKTTIIWDAHTGEAKQQ), 311 to 349 (FHSAPALDVDWQSNNTFASCSTDMCIHVCKLGQDRPIKT), 352 to 391 (GHTNEVNAIKWDPTGNLLASCSDDMTLKIWSMKHDTCVHD), 394 to 442 (AHNK…CIHT), 445 to 484 (KHQEPVYSVAFSPDGRYLASGSFDKCVHIWNTQTGALVHS), and 486 to 519 (RGTGGIFEVCWNAAGDKVGASASDGSVCVLDLRK).

This sequence belongs to the WD repeat EBI family. In terms of assembly, interacts with heterodimers of rxra and thrb, and this interaction is abrogated by thyroid hormone binding to thrb. Interacts with ncor1.

The protein localises to the nucleus. Its function is as follows. F-box-like protein which acts as an integral component of the N-CoR transcriptional corepressor complex. Probably regulates transcription activation mediated by nuclear receptors. May mediate the recruitment of the 19S proteasome complex, leading to the subsequent proteasomal degradation of the N-CoR complex, thereby allowing cofactor exchange and transcription activation. The sequence is that of F-box-like/WD repeat-containing protein TBL1XR1-A (tbl1xr1-a) from Xenopus laevis (African clawed frog).